Consider the following 516-residue polypeptide: Protein psiC (516 aa).

The N-terminal stretch at 1–19 is a signal peptide; sequence MKILILSFFLILGINLVFC. In terms of domain architecture, PA14 spans 109 to 249; it reads ESKDEPGIYV…YDACGVCLGK (141 aa). N-linked (GlcNAc...) asparagine glycans are attached at residues N134, N234, N250, N284, N333, N357, and N367. Positions 418–427 are enriched in low complexity; it reads DIIIDSSSDI. The segment at 418 to 465 is disordered; that stretch reads DIIIDSSSDIPIPTLSPSPQPSRFPTDTPTNTPMPPTRPPTPTEDPKI. Residues 449–460 are compositionally biased toward pro residues; it reads TPMPPTRPPTPT.

Belongs to the prespore-cell-inducing factor family.

Its subcellular location is the secreted. This chain is Protein psiC (psiC), found in Dictyostelium discoideum (Social amoeba).